Reading from the N-terminus, the 326-residue chain is 5-dehydro-2-deoxygluconokinase (326 aa).

Belongs to the carbohydrate kinase PfkB family.

It catalyses the reaction 5-dehydro-2-deoxy-D-gluconate + ATP = 6-phospho-5-dehydro-2-deoxy-D-gluconate + ADP + H(+). It participates in polyol metabolism; myo-inositol degradation into acetyl-CoA; acetyl-CoA from myo-inositol: step 5/7. Its function is as follows. Catalyzes the phosphorylation of 5-dehydro-2-deoxy-D-gluconate (2-deoxy-5-keto-D-gluconate or DKG) to 6-phospho-5-dehydro-2-deoxy-D-gluconate (DKGP). The protein is 5-dehydro-2-deoxygluconokinase of Shouchella clausii (strain KSM-K16) (Alkalihalobacillus clausii).